The chain runs to 332 residues: Endonuclease 8-like 2 (332 aa).

Pro2 (schiff-base intermediate with DNA) is an active-site residue. The Proton donor role is filled by Glu3. The active-site Proton donor; for beta-elimination activity is the Lys50. An N6-acetyllysine modification is found at Lys50. A disordered region spans residues Phe56–Asp121. Phosphoserine is present on Ser68. The span at Pro74 to Ala84 shows a compositional bias: basic and acidic residues. Over residues Gly94–Ala105 the composition is skewed to polar residues. Lys154 is modified (N6-acetyllysine). Residue Asn231 participates in DNA binding. The FPG-type zinc-finger motif lies at Gln284–Pro320. Arg310 serves as the catalytic Proton donor; for delta-elimination activity.

This sequence belongs to the FPG family. Binds EP300.

It localises to the nucleus. The enzyme catalyses 2'-deoxyribonucleotide-(2'-deoxyribose 5'-phosphate)-2'-deoxyribonucleotide-DNA = a 3'-end 2'-deoxyribonucleotide-(2,3-dehydro-2,3-deoxyribose 5'-phosphate)-DNA + a 5'-end 5'-phospho-2'-deoxyribonucleoside-DNA + H(+). Acetylation of Lys-50 leads to loss of DNA nicking activity. In terms of biological role, involved in base excision repair of DNA damaged by oxidation or by mutagenic agents. Has DNA glycosylase activity towards 5-hydroxyuracil and other oxidized derivatives of cytosine with a preference for mismatched double-stranded DNA (DNA bubbles). Has low or no DNA glycosylase activity towards thymine glycol, 2-hydroxyadenine, hypoxanthine and 8-oxoguanine. Has AP (apurinic/apyrimidinic) lyase activity and introduces nicks in the DNA strand. Cleaves the DNA backbone by beta-delta elimination to generate a single-strand break at the site of the removed base with both 3'- and 5'-phosphates. The polypeptide is Endonuclease 8-like 2 (NEIL2) (Pongo abelii (Sumatran orangutan)).